A 363-amino-acid polypeptide reads, in one-letter code: 3-dehydroquinate synthase (363 aa).

NAD(+) is bound by residues 134 to 135, lysine 147, lysine 156, and 174 to 177; these read TT and TLKT. Zn(2+) contacts are provided by glutamate 189, histidine 254, and histidine 271.

The protein belongs to the sugar phosphate cyclases superfamily. Dehydroquinate synthase family. Co(2+) is required as a cofactor. Zn(2+) serves as cofactor. The cofactor is NAD(+).

Its subcellular location is the cytoplasm. It catalyses the reaction 7-phospho-2-dehydro-3-deoxy-D-arabino-heptonate = 3-dehydroquinate + phosphate. It participates in metabolic intermediate biosynthesis; chorismate biosynthesis; chorismate from D-erythrose 4-phosphate and phosphoenolpyruvate: step 2/7. Its function is as follows. Catalyzes the conversion of 3-deoxy-D-arabino-heptulosonate 7-phosphate (DAHP) to dehydroquinate (DHQ). This Prochlorococcus marinus (strain MIT 9515) protein is 3-dehydroquinate synthase.